Consider the following 322-residue polypeptide: Fructose-1,6-bisphosphatase class 1 (322 aa).

Positions 84, 103, 105, and 106 each coordinate Mg(2+). Residues 106 to 109 (DGSS), Asn198, and Lys264 contribute to the substrate site. Glu270 is a binding site for Mg(2+).

Belongs to the FBPase class 1 family. Homotetramer. The cofactor is Mg(2+).

It localises to the cytoplasm. It carries out the reaction beta-D-fructose 1,6-bisphosphate + H2O = beta-D-fructose 6-phosphate + phosphate. It functions in the pathway carbohydrate biosynthesis; gluconeogenesis. This is Fructose-1,6-bisphosphatase class 1 from Saccharophagus degradans (strain 2-40 / ATCC 43961 / DSM 17024).